A 116-amino-acid polypeptide reads, in one-letter code: Large ribosomal subunit protein uL18 (116 aa).

This sequence belongs to the universal ribosomal protein uL18 family. As to quaternary structure, part of the 50S ribosomal subunit; part of the 5S rRNA/L5/L18/L25 subcomplex. Contacts the 5S and 23S rRNAs.

In terms of biological role, this is one of the proteins that bind and probably mediate the attachment of the 5S RNA into the large ribosomal subunit, where it forms part of the central protuberance. In Pseudomonas putida (strain W619), this protein is Large ribosomal subunit protein uL18.